A 309-amino-acid chain; its full sequence is Protein EXORDIUM-like 1 (309 aa).

The first 23 residues, 1–23 (MASFVMGYFLLFAVAFMCLDART), serve as a signal peptide directing secretion.

The protein belongs to the EXORDIUM family.

Its subcellular location is the secreted. It localises to the extracellular space. It is found in the apoplast. Functionally, may play a role in a brassinosteroid-dependent regulatory pathway that controls growth and development under low carbon and energy availability. This is Protein EXORDIUM-like 1 (EXL1) from Arabidopsis thaliana (Mouse-ear cress).